A 524-amino-acid polypeptide reads, in one-letter code: Calcium-dependent protein kinase 1 (524 aa).

Residues 1–34 form a disordered region; that stretch reads MGCSQSSNVKDFKTRRSKFTNGNNYGKSGNNKNS. Gly-2 carries N-myristoyl glycine lipidation. A lipid anchor (S-palmitoyl cysteine) is attached at Cys-3. The Basic cluster involved in membrane binding motif lies at 10–20; sequence KDFKTRRSKFT. Phosphoserine; by autocatalysis occurs at positions 17, 28, and 34. Residues 21–32 are compositionally biased toward low complexity; that stretch reads NGNNYGKSGNNK. The region spanning 56–325 is the Protein kinase domain; the sequence is YFKVRKLGSG…AKEALNSKWI (270 aa). Residues 62-70 and Lys-85 contribute to the ATP site; that span reads LGSGAYGEV. Position 64 is a phosphoserine; by PKG; by autocatalysis (Ser-64). At Thr-100 the chain carries Phosphothreonine; by autocatalysis. Ser-118 is modified (phosphoserine; by autocatalysis). The Proton acceptor role is filled by Asp-191. Residue Ser-217 is modified to Phosphoserine. Phosphoserine; by autocatalysis is present on Ser-220. A Phosphothreonine; by PKG; by autocatalysis modification is found at Thr-231. Ser-335 carries the phosphoserine; by autocatalysis modification. Residues 346 to 353 carry the J domain autoinhibitory motif motif; that stretch reads NMRKFEGS. Residues 346–364 are j domain; the sequence is NMRKFEGSQKLAQAAILFI. Positions 354–364 match the J domain interacts with the EF-hand domains motif; the sequence is QKLAQAAILFI. EF-hand domains are found at residues 372–407, 416–451, 452–487, and 488–521; these read EERK…LRSF, NVEE…KQIL, FSEE…TSIS, and EQMW…ICDN. Ca(2+)-binding residues include Asp-385, Asn-387, Asp-389, Gln-391, Glu-396, Asp-429, Asp-431, Asn-433, Tyr-435, Glu-440, Asp-465, Asp-467, Ser-469, Lys-471, Glu-476, Asp-499, Asn-501, Asp-503, Met-505, and Glu-510.

Belongs to the protein kinase superfamily. Ser/Thr protein kinase family. CDPK subfamily. In terms of assembly, monomer. Forms a high molecular weight (250 and 400 kDa) complex. Forms a complex composed of CDPK1, PKA regulatory subunit PKAr and 14-3-3I; the complex is formed in merozoites in response to low extracellular level of K(+) and may play a role in microneme secretion. Interacts (when phosphorylated) with 14-3-3I in a Ca(2+)-independent manner; the interaction does not regulate CDPK1 catalytic activity but is required for merozoite invasion of host erythrocytes. Interacts with PKA regulatory subunit PKAr; in a Ca(2+)-dependent manner. Interacts with SERA5 p50 in the late schizont stage. Interacts with inner membrane complex protein IMC1g in late schizonts. Interacts with rhoptry protein RhopH3 in merozoites. Requires Mg(2+) as cofactor. Myristoylated. Myristoylation, palmitoylation and the basic cluster motif are required for the localization to the parasitophorous vacuole membrane. In terms of processing, palmitoylated. Palmitoylation increases in merozoites in response to low level of extracellular K(+) in the host blood. Myristoylation, palmitoylation and the basic cluster motif are required for the localization to the parasitophorous vacuole membrane. Post-translationally, phosphorylation at Ser-64 occurs at late schizont stage and regulates CDPK1 protein-protein interaction. Phosphorylated at Ser-28, Ser-34 and Ser-64 in merozoites in response to low extracellular level of K(+). Phosphorylation at Thr-231 may regulate CDPK1 kinase activity. Phosphorylation increases in response to an increase in intracellular Ca(2+) levels. Autophosphorylated in vitro. Autophosphorylation does not affect membrane localization in vitro.

The protein localises to the membrane. It is found in the cell membrane. Its subcellular location is the parasitophorous vacuole membrane. It localises to the cytoplasm. The protein resides in the cell projection. The protein localises to the cilium. It is found in the flagellum. Its subcellular location is the host cell membrane. It catalyses the reaction L-seryl-[protein] + ATP = O-phospho-L-seryl-[protein] + ADP + H(+). The catalysed reaction is L-threonyl-[protein] + ATP = O-phospho-L-threonyl-[protein] + ADP + H(+). Activated by calcium. Upon calcium binding to the EF-hand domains, the C-terminus of the junction domain (J domain) undergoes a conformational change which results in the dissociation of the pseudo-substrate inhibitory motif from the catalytic domain. This, in turn may facilitate the autophosphorylation of the activation loop at Thr-231, which leads to the kinase activation. May be negatively regulated by PKA-mediated phosphorylation. Inhibited by purfalcamine. Its function is as follows. Calcium-dependent protein kinase which acts as a sensor and effector of intracellular Ca(2+) levels probably in part downstream of cGMP-activated PKG kinase. By phosphorylating various proteins, required for microneme secretion and thus merozoite egress from and invasion of host erythrocytes. During gametogenesis, essential for the development of both male and female gametes. Phosphorylates SERA5 p50 which enhances SERA5 p50 protease activity; however, SERA5 p50 protease activity has been shown in other studies to be controversial. Probably by phosphorylating SERA5 p50, plays a role in merozoite egress from host erythrocytes. Probably prior or during merozoite invasion of host erythrocytes, phosphorylates rhoptry protein RhopH3 which is required for RhopH3 localization to rhoptries and for its secretion. Probably in late schizonts, phosphorylates myosin A tail domain-interacting protein MTIP and glideosome-associated protein 45 GAP45, both of which are components of the motor complex that generates the force required by the parasite to invade host cells. In late schizonts, phosphorylates inner membrane complex protein IMC1g. In late schizonts, phosphorylates PKA regulatory subunit PKAr in a calcium-dependent manner, which may contribute to the dissociation of regulatory PKAr and catalytic PKAc subunits and promote the activation of PKAc. May phosphorylate raf kinase inhibitory protein RKIP which in turn may regulate CDPK1 catalytic activity. May phosphorylate proteins of the host erythrocyte membranes. This chain is Calcium-dependent protein kinase 1, found in Plasmodium falciparum (isolate 3D7).